Consider the following 315-residue polypeptide: Apolipoprotein F (315 aa).

The first 24 residues, 1-24 (MHSLRLILMSIQLLCYLLLCPVDA), serve as a signal peptide directing secretion. The propeptide occupies 25-154 (TSHGEATSVS…EQPGPKRAKR (130 aa)).

This sequence belongs to the apolipoprotein F family. Liver.

Its subcellular location is the secreted. Functionally, minor apolipoprotein that associates with LDL. Inhibits cholesteryl ester transfer protein (CETP) activity and appears to be an important regulator of cholesterol transport. Also associates to a lesser degree with VLDL, Apo-AI and Apo-AII. The sequence is that of Apolipoprotein F (Apof) from Mus musculus (Mouse).